The primary structure comprises 691 residues: Elongation factor G (691 aa).

Positions 8-282 constitute a tr-type G domain; the sequence is ERVRNIGIAA…AVVDYLPAPI (275 aa). GTP-binding positions include 17-24, 81-85, and 135-138; these read AHIDAGKT, DTPGH, and NKMD.

This sequence belongs to the TRAFAC class translation factor GTPase superfamily. Classic translation factor GTPase family. EF-G/EF-2 subfamily.

The protein localises to the cytoplasm. Functionally, catalyzes the GTP-dependent ribosomal translocation step during translation elongation. During this step, the ribosome changes from the pre-translocational (PRE) to the post-translocational (POST) state as the newly formed A-site-bound peptidyl-tRNA and P-site-bound deacylated tRNA move to the P and E sites, respectively. Catalyzes the coordinated movement of the two tRNA molecules, the mRNA and conformational changes in the ribosome. This chain is Elongation factor G, found in Prochlorococcus marinus subsp. pastoris (strain CCMP1986 / NIES-2087 / MED4).